The primary structure comprises 179 residues: NADH dehydrogenase [ubiquinone] 1 beta subcomplex subunit 9 (179 aa).

Position 2 is an N-acetylalanine (alanine 2). Position 85 is a phosphoserine (serine 85). Positions 136-162 are disordered; the sequence is EVKQLQEETPPGGPLTEALPPARKEGD.

This sequence belongs to the complex I LYR family. In terms of assembly, mammalian complex I is composed of 45 different subunits.

The protein localises to the mitochondrion inner membrane. Functionally, accessory subunit of the mitochondrial membrane respiratory chain NADH dehydrogenase (Complex I), that is believed to be not involved in catalysis. Complex I functions in the transfer of electrons from NADH to the respiratory chain. The immediate electron acceptor for the enzyme is believed to be ubiquinone. This is NADH dehydrogenase [ubiquinone] 1 beta subcomplex subunit 9 (NDUFB9) from Pongo abelii (Sumatran orangutan).